The primary structure comprises 679 residues: Enzymatic polyprotein (679 aa).

Residues 40–130 form a protease region; it reads LHCFVDTGAS…LYEPFIQFTD (91 aa). Residue D45 is part of the active site. In terms of domain architecture, Reverse transcriptase spans 272 to 452; that stretch reads LKVIKPSKSP…KKINFLGLEI (181 aa).

The protein belongs to the caulimoviridae enzymatic polyprotein family.

The enzyme catalyses DNA(n) + a 2'-deoxyribonucleoside 5'-triphosphate = DNA(n+1) + diphosphate. Encodes for at least two polypeptides: protease (PR) and reverse transcriptase (RT). The protease processes the polyprotein in cis. Reverse transcriptase is multifunctional enzyme that converts the viral RNA genome into dsDNA in viral cytoplasmic capsids. This enzyme displays a DNA polymerase activity that can copy either DNA or RNA templates, and a ribonuclease H (RNase H) activity that cleaves the RNA strand of RNA-DNA heteroduplexes in a partially processive 3'- to 5'-endonucleasic mode. Neo-synthesized pregenomic RNA (pgRNA) are encapsidated, and reverse-transcribed inside the nucleocapsid. Partial (+)DNA is synthesized from the (-)DNA template and generates the relaxed circular DNA (RC-DNA) genome. After budding and infection, the RC-DNA migrates in the nucleus, and is converted into a plasmid-like covalently closed circular DNA (cccDNA). This is Enzymatic polyprotein from Cauliflower mosaic virus (strain BBC) (CaMV).